Here is a 473-residue protein sequence, read N- to C-terminus: H(+)/Cl(-) exchange transporter ClcA (473 aa).

At Met1–Pro32 the chain is on the cytoplasmic side. Residues Leu33–Val69 form a helical membrane-spanning segment. Topologically, residues Gln70–Phe76 are periplasmic. The helical transmembrane segment at Leu77–Phe100 threads the bilayer. The short motif at Gly106–Pro110 is the Selectivity filter part_1 element. Ser107 is a binding site for chloride. Residues Ile109 to Leu116 constitute an intramembrane region (helical). At Glu117–Arg123 the chain is on the cytoplasmic side. The next 2 helical transmembrane spans lie at Trp124 to Ala141 and Glu148 to Phe166. A Selectivity filter part_2 motif is present at residues Gly146–Pro150. Over Arg167–Thr176 the chain is Cytoplasmic. 2 intramembrane regions (helical) span residues Leu177–Ala189 and Pro193–Ile201. The Cytoplasmic segment spans residues Glu202–Ser214. The chain crosses the membrane as a helical span at residues Ile215–Phe232. At Asn233–Leu252 the chain is on the periplasmic side. A helical transmembrane segment spans residues Trp253–Gln281. Topologically, residues Arg282 to Glu287 are cytoplasmic. The helical transmembrane segment at Ile288–Glu309 threads the bilayer. The Periplasmic segment spans residues Pro310–Ser329. 2 helical membrane-spanning segments follow: residues Val330 to Ser349 and Gly355 to Ala376. A Selectivity filter part_3 motif is present at residues Gly355–Pro359. Positions 356 and 357 each coordinate chloride. The Periplasmic portion of the chain corresponds to Val377–Ala386. An intramembrane region (helical) is located at residues Gly387 to Ser401. Positions Val402 to Ala404 form an intramembrane region, note=Loop between two helices. The segment at residues Pro405 to Thr416 is an intramembrane region (helical). An intramembrane region (note=Loop between two helices) is located at residues Asp417 to Leu421. A helical transmembrane segment spans residues Ile422 to Phe438. The Cytoplasmic segment spans residues Leu439 to Thr473. Tyr445 provides a ligand contact to chloride.

The protein belongs to the chloride channel (TC 2.A.49) family. ClcA subfamily. Homodimer.

It is found in the cell inner membrane. The enzyme catalyses 2 chloride(in) + H(+)(out) = 2 chloride(out) + H(+)(in). In terms of biological role, proton-coupled chloride transporter. Functions as antiport system and exchanges two chloride ions for 1 proton. Probably acts as an electrical shunt for an outwardly-directed proton pump that is linked to amino acid decarboxylation, as part of the extreme acid resistance (XAR) response. This chain is H(+)/Cl(-) exchange transporter ClcA, found in Salmonella arizonae (strain ATCC BAA-731 / CDC346-86 / RSK2980).